The chain runs to 339 residues: tRNA N6-adenosine threonylcarbamoyltransferase (339 aa).

Fe cation-binding residues include histidine 111 and histidine 115. Substrate contacts are provided by residues 134-138 (LVSGG), aspartate 167, glycine 180, and asparagine 274. A Fe cation-binding site is contributed by aspartate 302.

It belongs to the KAE1 / TsaD family. Fe(2+) is required as a cofactor.

It localises to the cytoplasm. It carries out the reaction L-threonylcarbamoyladenylate + adenosine(37) in tRNA = N(6)-L-threonylcarbamoyladenosine(37) in tRNA + AMP + H(+). In terms of biological role, required for the formation of a threonylcarbamoyl group on adenosine at position 37 (t(6)A37) in tRNAs that read codons beginning with adenine. Is involved in the transfer of the threonylcarbamoyl moiety of threonylcarbamoyl-AMP (TC-AMP) to the N6 group of A37, together with TsaE and TsaB. TsaD likely plays a direct catalytic role in this reaction. This Methylobacillus flagellatus (strain ATCC 51484 / DSM 6875 / VKM B-1610 / KT) protein is tRNA N6-adenosine threonylcarbamoyltransferase.